The primary structure comprises 279 residues: MPELPEVETLKNSLKDKLIGLIVENVELKRDNLRYKLSPLLATEILNTNILDVRRRAKYLIIDFNNDYSLIVHLGMSGRFTLQSANYKTQKHDHVIFDLSNGEKLIFNDTRRFGMIYSFKTDLLEQEFFNDLGIEPFSDLLTLEYLKDKLQTRKRPIKNLIMDNRVIVGVGNIYASESLHLARIHPDKSGSDLRDDEIENLIKSIRDVLTKAITAGGTTLKDFVNGDNKPGYFTQQLTVYGKEGQSCLSCSSTIIKTKHSGRSTFYCKTCQYRLASFTI.

The Schiff-base intermediate with DNA role is filled by P2. E3 serves as the catalytic Proton donor. The active-site Proton donor; for beta-elimination activity is K58. DNA contacts are provided by H92, R111, and R153. The FPG-type zinc finger occupies 238–272; that stretch reads TVYGKEGQSCLSCSSTIIKTKHSGRSTFYCKTCQY. R262 acts as the Proton donor; for delta-elimination activity in catalysis.

Belongs to the FPG family. As to quaternary structure, monomer. Zn(2+) serves as cofactor.

It catalyses the reaction Hydrolysis of DNA containing ring-opened 7-methylguanine residues, releasing 2,6-diamino-4-hydroxy-5-(N-methyl)formamidopyrimidine.. The catalysed reaction is 2'-deoxyribonucleotide-(2'-deoxyribose 5'-phosphate)-2'-deoxyribonucleotide-DNA = a 3'-end 2'-deoxyribonucleotide-(2,3-dehydro-2,3-deoxyribose 5'-phosphate)-DNA + a 5'-end 5'-phospho-2'-deoxyribonucleoside-DNA + H(+). Its function is as follows. Involved in base excision repair of DNA damaged by oxidation or by mutagenic agents. Acts as a DNA glycosylase that recognizes and removes damaged bases. Has a preference for oxidized purines, such as 7,8-dihydro-8-oxoguanine (8-oxoG). Has AP (apurinic/apyrimidinic) lyase activity and introduces nicks in the DNA strand. Cleaves the DNA backbone by beta-delta elimination to generate a single-strand break at the site of the removed base with both 3'- and 5'-phosphates. This is Formamidopyrimidine-DNA glycosylase from Rickettsia massiliae (strain Mtu5).